Reading from the N-terminus, the 1064-residue chain is mRNA 3'-end-processing protein RNA14 (1064 aa).

Disordered stretches follow at residues 34–106 and 119–192; these read ASQS…APSA and SETP…ASAV. The span at 44 to 54 shows a compositional bias: polar residues; the sequence is AQDQKSHSTLL. 2 stretches are compositionally biased toward low complexity: residues 66–86 and 151–191; these read SAIP…AIGD and QPAE…AASA. HAT repeat units lie at residues 327–364, 377–412, 423–456, 673–706, and 777–811; these read SNFA…YIRR, DVRS…FVAS, AKND…FESS, QRGA…FARR, and NDDN…YEYT. Disordered regions lie at residues 888 to 985 and 1022 to 1064; these read AVPT…DRSG and LPGA…SGRY. 2 stretches are compositionally biased toward basic and acidic residues: residues 899–910 and 933–948; these read SYKRPAPEDIPP and RYPE…RYRD. Residues 1026-1042 are compositionally biased toward pro residues; the sequence is GMPPAPPISRGPPPPPM.

Its subcellular location is the nucleus. The protein localises to the cytoplasm. Component of the cleavage factor IA (CFIA) complex, which is involved in the endonucleolytic cleavage during polyadenylation-dependent pre-mRNA 3'-end formation. The polypeptide is mRNA 3'-end-processing protein RNA14 (RNA14) (Cryptococcus neoformans var. neoformans serotype D (strain B-3501A) (Filobasidiella neoformans)).